The following is a 187-amino-acid chain: Peptide deformylase (187 aa).

Fe cation-binding residues include C107 and H149. Residue E150 is part of the active site. H153 serves as a coordination point for Fe cation.

This sequence belongs to the polypeptide deformylase family. Fe(2+) serves as cofactor.

It carries out the reaction N-terminal N-formyl-L-methionyl-[peptide] + H2O = N-terminal L-methionyl-[peptide] + formate. In terms of biological role, removes the formyl group from the N-terminal Met of newly synthesized proteins. Requires at least a dipeptide for an efficient rate of reaction. N-terminal L-methionine is a prerequisite for activity but the enzyme has broad specificity at other positions. In Microchaete diplosiphon (Fremyella diplosiphon), this protein is Peptide deformylase.